Reading from the N-terminus, the 617-residue chain is Proline--tRNA ligase (617 aa).

The protein belongs to the class-II aminoacyl-tRNA synthetase family. ProS type 1 subfamily. As to quaternary structure, homodimer.

Its subcellular location is the cytoplasm. It catalyses the reaction tRNA(Pro) + L-proline + ATP = L-prolyl-tRNA(Pro) + AMP + diphosphate. Functionally, catalyzes the attachment of proline to tRNA(Pro) in a two-step reaction: proline is first activated by ATP to form Pro-AMP and then transferred to the acceptor end of tRNA(Pro). As ProRS can inadvertently accommodate and process non-cognate amino acids such as alanine and cysteine, to avoid such errors it has two additional distinct editing activities against alanine. One activity is designated as 'pretransfer' editing and involves the tRNA(Pro)-independent hydrolysis of activated Ala-AMP. The other activity is designated 'posttransfer' editing and involves deacylation of mischarged Ala-tRNA(Pro). The misacylated Cys-tRNA(Pro) is not edited by ProRS. This is Proline--tRNA ligase from Streptococcus pneumoniae (strain Hungary19A-6).